Reading from the N-terminus, the 292-residue chain is 33 kDa chaperonin (292 aa).

2 cysteine pairs are disulfide-bonded: Cys230–Cys232 and Cys263–Cys266.

It belongs to the HSP33 family. Under oxidizing conditions two disulfide bonds are formed involving the reactive cysteines. Under reducing conditions zinc is bound to the reactive cysteines and the protein is inactive.

It localises to the cytoplasm. Its function is as follows. Redox regulated molecular chaperone. Protects both thermally unfolding and oxidatively damaged proteins from irreversible aggregation. Plays an important role in the bacterial defense system toward oxidative stress. The polypeptide is 33 kDa chaperonin (Enterobacter sp. (strain 638)).